We begin with the raw amino-acid sequence, 187 residues long: NADPH-dependent 3-demethoxyubiquinone 3-hydroxylase, mitochondrial (187 aa).

Residues 1–8 constitute a mitochondrion transit peptide; the sequence is MFRVITRG. Residue Lys21 participates in NADH binding. Repeat copies occupy residues 28-99 and 100-187. Residues 28 to 187 are 2 X approximate tandem repeats; the sequence is AGELGADRIY…KGAIAIAEKI (160 aa). Residues Glu30, Glu60, His63, Glu112, Glu148, and His151 each contribute to the Fe cation site. Lys186 serves as a coordination point for NADH.

It belongs to the COQ7 family. Component of a multi-subunit COQ enzyme complex. Fe cation is required as a cofactor.

It localises to the mitochondrion inner membrane. The protein localises to the mitochondrion. The protein resides in the nucleus. The catalysed reaction is a 5-methoxy-2-methyl-3-(all-trans-polyprenyl)benzoquinone + NADH + O2 = a 3-demethylubiquinone + NAD(+) + H2O. Its pathway is cofactor biosynthesis; ubiquinone biosynthesis. Catalyzes the hydroxylation of the 5-methoxy-2-methyl-3-(all-trans-polyprenyl)benzoquinone at the C6 position and participates in the biosynthesis of ubiquinone. Catalyzes the reaction through a substrate-mediated reduction pathway, whereby NADH shuttles electrons to 5-methoxy-2-methyl-3-(all-trans-decaprenyl)benzoquinone, which then transfers the electrons to the two Fe(3+) centers. The binding of 5-methoxy-2-methyl-3-(all-trans-polyprenyl)benzoquinone (DMQn) mediates reduction of the diiron center by nicotinamide adenine dinucleotide (NADH) and initiates oxygen activation for subsequent DMQ hydroxylation. Also has a structural role in the COQ enzyme complex, stabilizing other COQ polypeptides. Involved in lifespan determination in a ubiquinone-independent manner. Plays a role in modulating mitochondrial stress responses, acting in the nucleus, perhaps via regulating gene expression, independent of its characterized mitochondrial function in ubiquinone biosynthesis. Plays a role in modulating polyribosome formation. The polypeptide is NADPH-dependent 3-demethoxyubiquinone 3-hydroxylase, mitochondrial (Caenorhabditis elegans).